We begin with the raw amino-acid sequence, 410 residues long: Chitin deacetylase 3 (410 aa).

A signal peptide spans 1 to 18; it reads MYGHLSLSTLSLLAVVAA. A propeptide spanning residues 19–39 is cleaved from the precursor; it reads APFHESWLQPRDSDVSQLFRR. N61 and N80 each carry an N-linked (GlcNAc...) asparagine glycan. The NodB homology domain maps to 124 to 314; that stretch reads KVWALSFDDG…KAVANGWSVK (191 aa). D131 (proton acceptor) is an active-site residue. An acetate-binding site is contributed by D131. D132 is a Co(2+) binding site. N149 carries N-linked (GlcNAc...) asparagine glycosylation. Co(2+) is bound by residues H183 and H187. Acetate is bound at residue Y225. The N-linked (GlcNAc...) asparagine glycan is linked to N279. Residue H289 is the Proton donor of the active site. N293 carries N-linked (GlcNAc...) asparagine glycosylation. S385 carries the GPI-anchor amidated serine lipid modification. Positions 386–410 are cleaved as a propeptide — removed in mature form; it reads SSWPIANRPSLFVIACGLALAAIMV.

The protein belongs to the polysaccharide deacetylase family. It depends on Co(2+) as a cofactor.

Its subcellular location is the cell membrane. It carries out the reaction [(1-&gt;4)-N-acetyl-beta-D-glucosaminyl](n) + n H2O = chitosan + n acetate. Functionally, hydrolyzes the N-acetamido groups of N-acetyl-D-glucosamine residues in chitin to form chitosan and acetate. Chitosan is required to anchor melanin to the cell wall, for maintenance of cell wall integrity, and for proper cytokinesis. Chitosan offers an advantage during infection as it is less readily detected than chitin by host immunosurveillance mechanisms. The sequence is that of Chitin deacetylase 3 from Cryptococcus neoformans var. neoformans serotype D (strain B-3501A) (Filobasidiella neoformans).